Reading from the N-terminus, the 703-residue chain is Prolyl 3-hydroxylase 2 (703 aa).

The first 21 residues, 1–21, serve as a signal peptide directing secretion; the sequence is MRESTWVSLLLLLLLPAPQRG. The segment at 18–40 is disordered; it reads PQRGGPQDGRGSPEPEPERGPLQ. 4 TPR repeats span residues 42 to 75, 144 to 177, 205 to 238, and 301 to 334; these read FDLLYASGVAAYYSGDYEGAVRDLEAALRSHRRL, RVPYNYLQRAYIKLNQLDKAMEAAHTFFMANPEH, HLESYNAGVKHYEADDFEAAIKYFEQALREYFNE, and PLHYDYLQFAYYRVGEYVKALECAKAYLMFHPDD. N-linked (GlcNAc...) asparagine glycans are attached at residues Asn-444, Asn-455, and Asn-544. In terms of domain architecture, Fe2OG dioxygenase spans 552–666; it reads THMVCRTALS…RCAVALWFTL (115 aa). Fe cation contacts are provided by His-575, Asp-577, and His-647. Arg-657 is an active-site residue. The Prevents secretion from ER motif lies at 700–703; it reads KDEL.

It belongs to the leprecan family. The cofactor is Fe cation. L-ascorbate is required as a cofactor. As to expression, detected at low levels in cartilage.

The protein resides in the endoplasmic reticulum. It is found in the sarcoplasmic reticulum. The protein localises to the golgi apparatus. The catalysed reaction is L-prolyl-[collagen] + 2-oxoglutarate + O2 = trans-3-hydroxy-L-prolyl-[collagen] + succinate + CO2. Its function is as follows. Prolyl 3-hydroxylase that catalyzes the post-translational formation of 3-hydroxyproline on collagens. Contributes to proline 3-hydroxylation of collagen COL4A1 and COL1A1 in tendons, the eye sclera and in the eye lens capsule. Has high activity with the type IV collagen COL4A1, and lower activity with COL1A1. Catalyzes hydroxylation of the first Pro in Gly-Pro-Hyp sequences where Hyp is 4-hydroxyproline. Has no activity on substrates that lack 4-hydroxyproline in the third position. This is Prolyl 3-hydroxylase 2 from Rattus norvegicus (Rat).